The chain runs to 470 residues: Argininosuccinate lyase (470 aa).

Belongs to the lyase 1 family. Argininosuccinate lyase subfamily.

It localises to the cytoplasm. The enzyme catalyses 2-(N(omega)-L-arginino)succinate = fumarate + L-arginine. Its pathway is amino-acid biosynthesis; L-arginine biosynthesis; L-arginine from L-ornithine and carbamoyl phosphate: step 3/3. In Mycolicibacterium vanbaalenii (strain DSM 7251 / JCM 13017 / BCRC 16820 / KCTC 9966 / NRRL B-24157 / PYR-1) (Mycobacterium vanbaalenii), this protein is Argininosuccinate lyase.